Consider the following 311-residue polypeptide: Pyrimidine-specific ribonucleoside hydrolase RihA (311 aa).

Residue H240 is part of the active site.

Belongs to the IUNH family. RihA subfamily.

Functionally, hydrolyzes cytidine or uridine to ribose and cytosine or uracil, respectively. In Salmonella enteritidis PT4 (strain P125109), this protein is Pyrimidine-specific ribonucleoside hydrolase RihA.